Consider the following 428-residue polypeptide: Phosphomethylpyrimidine synthase 2 (428 aa).

Substrate is bound by residues M94, Y123, H162, 184–186 (SRG), 225–228 (NGMR), and E264. H268 serves as a coordination point for Zn(2+). Position 291 (Y291) interacts with substrate. Residue H332 coordinates Zn(2+). Positions 408, 411, and 415 each coordinate [4Fe-4S] cluster.

This sequence belongs to the ThiC family. The cofactor is [4Fe-4S] cluster.

It catalyses the reaction 5-amino-1-(5-phospho-beta-D-ribosyl)imidazole + S-adenosyl-L-methionine = 4-amino-2-methyl-5-(phosphooxymethyl)pyrimidine + CO + 5'-deoxyadenosine + formate + L-methionine + 3 H(+). It participates in cofactor biosynthesis; thiamine diphosphate biosynthesis. Catalyzes the synthesis of the hydroxymethylpyrimidine phosphate (HMP-P) moiety of thiamine from aminoimidazole ribotide (AIR) in a radical S-adenosyl-L-methionine (SAM)-dependent reaction. In Methanosarcina acetivorans (strain ATCC 35395 / DSM 2834 / JCM 12185 / C2A), this protein is Phosphomethylpyrimidine synthase 2.